Consider the following 88-residue polypeptide: Small ribosomal subunit protein bS20 (88 aa).

Belongs to the bacterial ribosomal protein bS20 family.

In terms of biological role, binds directly to 16S ribosomal RNA. This is Small ribosomal subunit protein bS20 from Heliobacterium modesticaldum (strain ATCC 51547 / Ice1).